A 348-amino-acid chain; its full sequence is Dihydroorotase (348 aa).

Residues His-17 and His-19 each coordinate Zn(2+). Residues His-19–Arg-21 and Asn-45 contribute to the substrate site. Lys-103, His-140, and His-178 together coordinate Zn(2+). N6-carboxylysine is present on Lys-103. His-140 contacts substrate. A substrate-binding site is contributed by Leu-223. Asp-251 lines the Zn(2+) pocket. The active site involves Asp-251. The substrate site is built by His-255 and Ala-267.

The protein belongs to the metallo-dependent hydrolases superfamily. DHOase family. Class II DHOase subfamily. Homodimer. Zn(2+) serves as cofactor.

The enzyme catalyses (S)-dihydroorotate + H2O = N-carbamoyl-L-aspartate + H(+). Its pathway is pyrimidine metabolism; UMP biosynthesis via de novo pathway; (S)-dihydroorotate from bicarbonate: step 3/3. Catalyzes the reversible cyclization of carbamoyl aspartate to dihydroorotate. The sequence is that of Dihydroorotase from Yersinia enterocolitica serotype O:8 / biotype 1B (strain NCTC 13174 / 8081).